A 113-amino-acid polypeptide reads, in one-letter code: MEIEKNYRINSLFEFYQPLLTKKQNDYLELYYGDDYSLGEIAENFHVSRQAVYDNIKRTESILEDYEAKLHLYAEFQVRNQQADRIQRYVRENYPDDATLNHLVNHLESLEEE.

The protein belongs to the UPF0122 family.

Might take part in the signal recognition particle (SRP) pathway. This is inferred from the conservation of its genetic proximity to ftsY/ffh. May be a regulatory protein. This chain is UPF0122 protein Lreu_1156, found in Limosilactobacillus reuteri (strain DSM 20016) (Lactobacillus reuteri).